A 368-amino-acid polypeptide reads, in one-letter code: ATP-dependent (S)-NAD(P)H-hydrate dehydratase (368 aa).

In terms of domain architecture, YjeF C-terminal spans 3–359; that stretch reads SPSKKLLANV…DEVHGSFLDL (357 aa). (6S)-NADPHX is bound by residues Gly-120 and 173-179; that span reads NVVEFAR. ATP-binding positions include 217–221 and 236–245; these read KGPHD and GGLKRSGGQG. Asp-246 contributes to the (6S)-NADPHX binding site.

It belongs to the NnrD/CARKD family. It depends on Mg(2+) as a cofactor.

It is found in the cytoplasm. It catalyses the reaction (6S)-NADHX + ATP = ADP + phosphate + NADH + H(+). The enzyme catalyses (6S)-NADPHX + ATP = ADP + phosphate + NADPH + H(+). In terms of biological role, catalyzes the dehydration of the S-form of NAD(P)HX at the expense of ATP, which is converted to ADP. Together with NAD(P)HX epimerase, which catalyzes the epimerization of the S- and R-forms, the enzyme allows the repair of both epimers of NAD(P)HX, a damaged form of NAD(P)H that is a result of enzymatic or heat-dependent hydration. The polypeptide is ATP-dependent (S)-NAD(P)H-hydrate dehydratase (Ajellomyces capsulatus (strain G186AR / H82 / ATCC MYA-2454 / RMSCC 2432) (Darling's disease fungus)).